The primary structure comprises 349 residues: Phosphoribosylformylglycinamidine cyclo-ligase (349 aa).

It belongs to the AIR synthase family.

Its subcellular location is the cytoplasm. The enzyme catalyses 2-formamido-N(1)-(5-O-phospho-beta-D-ribosyl)acetamidine + ATP = 5-amino-1-(5-phospho-beta-D-ribosyl)imidazole + ADP + phosphate + H(+). It participates in purine metabolism; IMP biosynthesis via de novo pathway; 5-amino-1-(5-phospho-D-ribosyl)imidazole from N(2)-formyl-N(1)-(5-phospho-D-ribosyl)glycinamide: step 2/2. This Methanococcus maripaludis (strain DSM 14266 / JCM 13030 / NBRC 101832 / S2 / LL) protein is Phosphoribosylformylglycinamidine cyclo-ligase.